The primary structure comprises 303 residues: Probable alpha-L-glutamate ligase 1 (303 aa).

The 184-residue stretch at Leu-104–Glu-287 folds into the ATP-grasp domain. ATP contacts are provided by residues Lys-141, Glu-178 to Phe-179, Asp-187, and Arg-211 to Asn-213. Mg(2+)-binding residues include Asp-248, Glu-260, and Asn-262. Mn(2+) is bound by residues Asp-248, Glu-260, and Asn-262.

It belongs to the RimK family. Requires Mg(2+) as cofactor. Mn(2+) serves as cofactor.

The sequence is that of Probable alpha-L-glutamate ligase 1 from Hahella chejuensis (strain KCTC 2396).